The sequence spans 570 residues: Peptidyl-prolyl cis-trans isomerase FKBP9 (570 aa).

The signal sequence occupies residues 1–24 (MAFGARGWRRWSLLLLLLWVTGQA). PPIase FKBP-type domains lie at 54-142 (GDFV…VDIW), 166-254 (SDFV…LDLH), 278-365 (GDFL…IDFH), and 389-477 (GDYL…LELV). Residues Asn-174, Asn-286, Asn-302, and Asn-397 are each glycosylated (N-linked (GlcNAc...) asparagine). 2 EF-hand domains span residues 488–523 (WNGE…QVAS) and 533–568 (NAEM…TKHD). Ca(2+) is bound by residues Asp-501, Asp-503, Asn-505, Glu-507, Glu-512, Asp-546, Asn-548, Asp-550, Lys-552, and Glu-557. Residues 567–570 (HDEL) carry the Prevents secretion from ER motif.

Post-translationally, phosphorylated.

The protein resides in the endoplasmic reticulum lumen. It catalyses the reaction [protein]-peptidylproline (omega=180) = [protein]-peptidylproline (omega=0). With respect to regulation, inhibited by FK506. In terms of biological role, PPIases accelerate the folding of proteins during protein synthesis. The protein is Peptidyl-prolyl cis-trans isomerase FKBP9 (Fkbp9) of Rattus norvegicus (Rat).